Consider the following 154-residue polypeptide: Melatonin receptor type 1A (154 aa).

The Cytoplasmic segment spans residues 1–19; the sequence is YCYICHSLKYDRWYSNRNS. A helical membrane pass occupies residues 20-40; sequence LCCVFLICVLTLVAIVPNLCM. The Extracellular segment spans residues 41 to 62; it reads GTLQYDPRIYSCTFAQSVSSAY. The helical transmembrane segment at 63–83 threads the bilayer; it reads TIAVVVFHFLVPMVIVIFRYL. The Cytoplasmic segment spans residues 84–115; it reads RIWVLVLQIRWRAKPENNPRLKPQDFRNFVTM. Residues 116–136 traverse the membrane as a helical segment; sequence FVVFVLFAICWAPLNFIGLAV. At 137-149 the chain is on the extracellular side; it reads ASDPASMAPRIPE.

Belongs to the G-protein coupled receptor 1 family.

The protein resides in the cell membrane. High affinity receptor for melatonin. Likely to mediate the reproductive and circadian actions of melatonin. The activity of this receptor is mediated by pertussis toxin sensitive G proteins that inhibit adenylate cyclase activity. This is Melatonin receptor type 1A (MTNR1A) from Sus scrofa (Pig).